The following is an 87-amino-acid chain: UPF0335 protein Avi_3695 (87 aa).

The protein belongs to the UPF0335 family.

The chain is UPF0335 protein Avi_3695 from Allorhizobium ampelinum (strain ATCC BAA-846 / DSM 112012 / S4) (Agrobacterium vitis (strain S4)).